The chain runs to 150 residues: L-alanine exporter AlaE (150 aa).

A run of 4 helical transmembrane segments spans residues 17–37 (FAMV…VSGM), 48–68 (LSIP…DYVL), 86–106 (LVAY…TVGA), and 111–131 (IITA…LYGY).

Belongs to the AlaE exporter family.

The protein localises to the cell inner membrane. Exports L-alanine. This Vibrio cholerae serotype O1 (strain ATCC 39315 / El Tor Inaba N16961) protein is L-alanine exporter AlaE.